Reading from the N-terminus, the 346-residue chain is T-box protein 12 (346 aa).

A compositionally biased stretch (acidic residues) spans 33-48; sequence DEEDVEVDVEDVDDVD. Residues 33–66 form a disordered region; that stretch reads DEEDVEVDVEDVDDVDLSSIPSKSPERSRGRPKI. The segment at residues 86–268 is a DNA-binding region (T-box); the sequence is LWAKFFDLGT…KNPFAKGFRD (183 aa).

The protein localises to the nucleus. Functionally, transcription factor. Involved in cell fate determination; required to pattern the posterior hindgut. Involved in motor neuron fate determination and maintenance, acting as a transcriptional repressor to counteract gene activation by transcription factor unc-3 in a subset of motor neurons. Required throughout development to repress transcription by unc-3, probably acting by binding to specific promoter elements. Represses expression of VA and VB motor neuron-specific effector genes, such as DEG/ENaC channel del-1 and the innexin inx-12, in DA and DB motor neurons. Represses expression of transcription factor bnc-1, perhaps acting directly, in DA and DB motor neurons. The chain is T-box protein 12 (mab-9) from Caenorhabditis elegans.